The primary structure comprises 135 residues: Large ribosomal subunit protein eL32 (135 aa).

It belongs to the eukaryotic ribosomal protein eL32 family.

The sequence is that of Large ribosomal subunit protein eL32 (rpl32e) from Methanococcus maripaludis (strain DSM 14266 / JCM 13030 / NBRC 101832 / S2 / LL).